The primary structure comprises 129 residues: Aldose 1-epimerase (129 aa).

The protein belongs to the aldose epimerase family.

It carries out the reaction alpha-D-glucose = beta-D-glucose. The protein operates within carbohydrate metabolism; hexose metabolism. Mutarotase converts alpha-aldose to the beta-anomer. It is active on D-glucose, L-arabinose, D-xylose, D-galactose, maltose and lactose. The protein is Aldose 1-epimerase (galM) of Lactobacillus helveticus (Lactobacillus suntoryeus).